The following is a 332-amino-acid chain: Monoterpene synthase 25 (332 aa).

Mg(2+) contacts are provided by D115, E180, N240, S244, and E248. Residues 115–121 (DDPVVFD) carry the DDXXXXD motif motif. Positions 240-248 (NDILSFYKE) match the NSE/DTE motif motif.

It belongs to the trichodiene synthase family. It depends on Mg(2+) as a cofactor.

Its function is as follows. Terpene cyclase that catalyzes the cyclization of geranyl diphosphate (GPP) to myrcene and linalool. This Postia placenta (strain ATCC 44394 / Madison 698-R) (Brown rot fungus) protein is Monoterpene synthase 25.